The chain runs to 514 residues: MSGKSAAKFSPAGRLTAEDLGAIHLIGAGGVGMSGLARLFLTRGISVSGSELREWPSLAGLRALGGTIHMSHEVANLDGVDTVVYSSAIPSDHLELVEARRRGLRVLHRSEALATAMTGRRTVAVAGTHGKTTTTSMVTMVLQQAGVDPSFVIGGEISEVGSGAHHGTGDYFVVEADESDRSFLIYRPFVSIITNIEADHLNTYGDLANLEAAFADFARLTDPDGFIITCADDVGGRRLAETLRAEGRRVYTYGISTDADLRLTEMASSTRGIRYLAEIDGRSLGEFRLPVPGRHMGLNSASAVLAEYLLDLPLEAAQSALAAFPGVRRRFERKGVADDVLVYDEYAYHPTPIALALRTLREVAGDGGLIVVFQPYRLYRTRDLQAEIAEALAIADELVLLEVFGPGELREPGEGSAALIEAVPLPVDRKVFVDSWDAAPVEVARRAKPGDVVVTMGAPPSSLMGDQLLDALSRRGAAGPAGTVPGGDVGGATTIGGTIPDIPGGSTPDASAAG.

ATP is bound at residue 127–133 (GTHGKTT). Residues 495-505 (IGGTIPDIPGG) are compositionally biased toward low complexity. Residues 495 to 514 (IGGTIPDIPGGSTPDASAAG) form a disordered region.

This sequence belongs to the MurCDEF family.

It is found in the cytoplasm. The enzyme catalyses UDP-N-acetyl-alpha-D-muramate + L-alanine + ATP = UDP-N-acetyl-alpha-D-muramoyl-L-alanine + ADP + phosphate + H(+). Its pathway is cell wall biogenesis; peptidoglycan biosynthesis. Functionally, cell wall formation. The polypeptide is UDP-N-acetylmuramate--L-alanine ligase (Salinispora tropica (strain ATCC BAA-916 / DSM 44818 / JCM 13857 / NBRC 105044 / CNB-440)).